The sequence spans 457 residues: ATP synthase subunit beta (457 aa).

147–154 (GGAGVGKT) contacts ATP.

This sequence belongs to the ATPase alpha/beta chains family. As to quaternary structure, F-type ATPases have 2 components, CF(1) - the catalytic core - and CF(0) - the membrane proton channel. CF(1) has five subunits: alpha(3), beta(3), gamma(1), delta(1), epsilon(1). CF(0) has three main subunits: a(1), b(2) and c(9-12). The alpha and beta chains form an alternating ring which encloses part of the gamma chain. CF(1) is attached to CF(0) by a central stalk formed by the gamma and epsilon chains, while a peripheral stalk is formed by the delta and b chains.

The protein resides in the cell inner membrane. The catalysed reaction is ATP + H2O + 4 H(+)(in) = ADP + phosphate + 5 H(+)(out). Produces ATP from ADP in the presence of a proton gradient across the membrane. The catalytic sites are hosted primarily by the beta subunits. The sequence is that of ATP synthase subunit beta from Histophilus somni (strain 2336) (Haemophilus somnus).